The sequence spans 155 residues: DNA polymerase epsilon subunit 4 (155 aa).

Composition is skewed to acidic residues over residues 1–16 and 24–48; these read MASEELFEAEFSEEQD and ETEEAELAETEEPLEITEESPDNPE. Residues 1-76 are disordered; that stretch reads MASEELFEAE…APADNEAKMT (76 aa). Polar residues predominate over residues 49 to 65; sequence AESTTEQLTEKPVTNGN.

As to quaternary structure, component of the DNA polymerase epsilon complex consisting of four subunits: the catalytic subunit PolE1/DNApol-epsilon255 and the accessory subunits PolE2/DNApol-epsilon58, Chrac-14/DNApolE3 and PolE4/Mes4.

The protein resides in the nucleus. Its function is as follows. Accessory component of the DNA polymerase epsilon complex. Participates in DNA repair and in chromosomal DNA replication. Has a role in cell cycle progression. Required for wing morphogenesis. In Drosophila melanogaster (Fruit fly), this protein is DNA polymerase epsilon subunit 4.